A 115-amino-acid polypeptide reads, in one-letter code: NADH-ubiquinone oxidoreductase chain 3 (115 aa).

3 consecutive transmembrane segments (helical) span residues 4–24 (LLVI…AFWL), 55–75 (FFLV…LLPI), and 84–104 (INMV…GLAY).

Belongs to the complex I subunit 3 family. Core subunit of respiratory chain NADH dehydrogenase (Complex I) which is composed of 45 different subunits. Interacts with TMEM186. Interacts with TMEM242.

Its subcellular location is the mitochondrion inner membrane. The catalysed reaction is a ubiquinone + NADH + 5 H(+)(in) = a ubiquinol + NAD(+) + 4 H(+)(out). Functionally, core subunit of the mitochondrial membrane respiratory chain NADH dehydrogenase (Complex I) which catalyzes electron transfer from NADH through the respiratory chain, using ubiquinone as an electron acceptor. Essential for the catalytic activity of complex I. The chain is NADH-ubiquinone oxidoreductase chain 3 from Ochrotomys nuttalli (Golden mouse).